The following is a 429-amino-acid chain: UPF0053 protein YugS (429 aa).

4 helical membrane passes run 1-21 (MLIL…VFVA), 61-81 (ACQL…EPTF), 101-121 (IVTF…MGEL), and 133-153 (AVSL…YPFI). One can recognise a CNNM transmembrane domain in the interval 1–201 (MLILQLIAIF…YEKGEINQSE (201 aa)). 2 consecutive CBS domains span residues 220–281 (MIPR…PIKL) and 284–341 (IMRP…IRDE).

This sequence belongs to the UPF0053 family.

The protein resides in the cell membrane. The sequence is that of UPF0053 protein YugS (yugS) from Bacillus subtilis (strain 168).